The primary structure comprises 83 residues: MRFHTLLFLSFLLLVSCALICTAQHPGLEKSGMFHENVGKGQHIEEKRSCIERMQTCEVEAGLPCCSGAPCICPYIGDCICIQ.

A signal peptide spans 1 to 23 (MRFHTLLFLSFLLLVSCALICTA). Residues 24-48 (QHPGLEKSGMFHENVGKGQHIEEKR) constitute a propeptide that is removed on maturation. 3 cysteine pairs are disulfide-bonded: Cys-50–Cys-66, Cys-57–Cys-71, and Cys-65–Cys-81.

It belongs to the neurotoxin 07 (Beta/delta-agtx) family. 03 (aga-4) subfamily. JZTX sub-subfamily. Expressed by the venom gland.

It localises to the secreted. In terms of biological role, inhibits TTX-sensitive sodium currents in rat dorsal root ganglion (DRG) neurons. This is U25-theraphotoxin-Cg1a from Chilobrachys guangxiensis (Chinese earth tiger tarantula).